The primary structure comprises 427 residues: Trigger factor (427 aa).

One can recognise a PPIase FKBP-type domain in the interval 163 to 248 (GDIAVIDFKG…IKSIKVKELP (86 aa)).

This sequence belongs to the FKBP-type PPIase family. Tig subfamily.

It localises to the cytoplasm. It catalyses the reaction [protein]-peptidylproline (omega=180) = [protein]-peptidylproline (omega=0). In terms of biological role, involved in protein export. Acts as a chaperone by maintaining the newly synthesized protein in an open conformation. Functions as a peptidyl-prolyl cis-trans isomerase. In Clostridium beijerinckii (strain ATCC 51743 / NCIMB 8052) (Clostridium acetobutylicum), this protein is Trigger factor.